The sequence spans 285 residues: 4-diphosphocytidyl-2-C-methyl-D-erythritol kinase (285 aa).

Residue Lys12 is part of the active site. ATP is bound at residue 95–105 (PVGAGLAGGST). Residue Asp137 is part of the active site.

It belongs to the GHMP kinase family. IspE subfamily.

It catalyses the reaction 4-CDP-2-C-methyl-D-erythritol + ATP = 4-CDP-2-C-methyl-D-erythritol 2-phosphate + ADP + H(+). It participates in isoprenoid biosynthesis; isopentenyl diphosphate biosynthesis via DXP pathway; isopentenyl diphosphate from 1-deoxy-D-xylulose 5-phosphate: step 3/6. In terms of biological role, catalyzes the phosphorylation of the position 2 hydroxy group of 4-diphosphocytidyl-2C-methyl-D-erythritol. The protein is 4-diphosphocytidyl-2-C-methyl-D-erythritol kinase of Syntrophomonas wolfei subsp. wolfei (strain DSM 2245B / Goettingen).